Here is a 363-residue protein sequence, read N- to C-terminus: 3-isopropylmalate dehydrogenase (363 aa).

An NAD(+)-binding site is contributed by 79 to 92; sequence GPKWEHLPPNDQPE. Arg-100, Arg-110, Arg-139, and Asp-228 together coordinate substrate. Residues Asp-228, Asp-252, and Asp-256 each coordinate Mg(2+). Residue 286–298 participates in NAD(+) binding; sequence GSAPDIAGKNIAN.

The protein belongs to the isocitrate and isopropylmalate dehydrogenases family. LeuB type 1 subfamily. In terms of assembly, homodimer. Requires Mg(2+) as cofactor. The cofactor is Mn(2+).

Its subcellular location is the cytoplasm. It carries out the reaction (2R,3S)-3-isopropylmalate + NAD(+) = 4-methyl-2-oxopentanoate + CO2 + NADH. Its pathway is amino-acid biosynthesis; L-leucine biosynthesis; L-leucine from 3-methyl-2-oxobutanoate: step 3/4. Its function is as follows. Catalyzes the oxidation of 3-carboxy-2-hydroxy-4-methylpentanoate (3-isopropylmalate) to 3-carboxy-4-methyl-2-oxopentanoate. The product decarboxylates to 4-methyl-2 oxopentanoate. The protein is 3-isopropylmalate dehydrogenase of Vibrio parahaemolyticus serotype O3:K6 (strain RIMD 2210633).